We begin with the raw amino-acid sequence, 313 residues long: D-alanine--D-alanine ligase (313 aa).

Residues 108–308 form the ATP-grasp domain; that stretch reads KLVWQQTGVP…YSELVVKVLS (201 aa). ATP is bound at residue 138–193; that stretch reads VAKLGLPLFVKPASEGSSVAVLKVKTADALPAALAEAATHDKIVIVEKSIEGGGEY. Residues aspartate 262, glutamate 275, and asparagine 277 each coordinate Mg(2+).

This sequence belongs to the D-alanine--D-alanine ligase family. The cofactor is Mg(2+). It depends on Mn(2+) as a cofactor.

The protein localises to the cytoplasm. It carries out the reaction 2 D-alanine + ATP = D-alanyl-D-alanine + ADP + phosphate + H(+). It participates in cell wall biogenesis; peptidoglycan biosynthesis. In terms of biological role, cell wall formation. This is D-alanine--D-alanine ligase from Burkholderia cenocepacia (strain HI2424).